Here is a 1045-residue protein sequence, read N- to C-terminus: Tyrosine-protein kinase-like otk (1045 aa).

A signal peptide spans 1 to 25 (MPIVMDMNMLLMLSLAFTVMAPASA). Ig-like C2-type domains follow at residues 26 to 116 (SSSR…AKLS), 115 to 200 (LSVI…RVMS), 260 to 373 (PEGL…APVN), 376 to 469 (PGAL…VAIN), and 474 to 564 (PRFS…VRLL). Over 26–587 (SSSRFTQPPQ…AGDGFLVTRA (562 aa)) the chain is Extracellular. Intrachain disulfides connect C49–C97, C139–C189, C285–C362, and C406–C453. N344, N424, N435, N442, N450, N463, N518, and N530 each carry an N-linked (GlcNAc...) asparagine glycan. C496 and C548 are joined by a disulfide. A helical membrane pass occupies residues 588-608 (VLITMTVALAYIVLVVGLMLW). The Cytoplasmic segment spans residues 609–1045 (CRYRRQARKA…LSKAMQAAEK (437 aa)). Positions 628–676 (AGGDQAESGKNTEQEPCLSKQRNGHGKSRTAANGDAQKSDDTACSQQSK) are disordered. S681 is modified (phosphoserine). Residues 695 to 1040 (LSELIQIGRG…QLGAALSKAM (346 aa)) enclose the Protein kinase; inactive domain. Residues 722–790 (ASPSDKDADT…QPQEQAQSES (69 aa)) form a disordered region. Over residues 725-736 (SDKDADTEKQHS) the composition is skewed to basic and acidic residues. Gly residues predominate over residues 743 to 752 (GASGASGCGS). A compositionally biased stretch (acidic residues) spans 771-782 (DDIEEIKEEEQP).

Belongs to the protein kinase superfamily. Tyr protein kinase family. Insulin receptor subfamily. Interacts with plexA; component of a receptor complex that mediates the repulsive signaling in response to Semaphorin ligands.

It localises to the cell membrane. Its function is as follows. Acts as a calcium-dependent, homophilic cell adhesion molecule that regulates neural recognition during the development of the nervous system. Component of the repulsive Plexin signaling response to regulate motor axon guidance at the embryonic stage. Also component of a receptor complex that is required in the adult visual system to innervate the lamina layer; specific targeting of R1-R6 axons. The protein is Tyrosine-protein kinase-like otk of Drosophila mojavensis (Fruit fly).